The sequence spans 64 residues: MPKIIEAIYENGVFKPLQKVDLKEGEKAKIVLESISDKTFGILKASETEIKKVLEEIDDFWGVC.

This sequence belongs to the UPF0165 family.

Its function is as follows. Possibly the antitoxin component of a type II toxin-antitoxin (TA) system. Its cognate toxin is VapC4 (Potential). This chain is Putative antitoxin VapB4 (vapB4), found in Archaeoglobus fulgidus (strain ATCC 49558 / DSM 4304 / JCM 9628 / NBRC 100126 / VC-16).